We begin with the raw amino-acid sequence, 354 residues long: MKFQILSVAALASLASAVSDALDKRDSPLDVSLEVTDNTNVKATIKNTGTEDLKLFKTGTFLDDSHVEKVEVFRSGKQPEQVAFEGLRLRVSTANLDESAFKILKAGETIEAAFDIAVAHDLSVGGDFDLLTEGAFAYANLDSTSIAGAVPFTSNKVTTAVDGAKAGKVRRDWIDLAKRTIVQSDCTGSRGTATRTALSNCASLARTAANAAVNNSAKLNEYFKSTSSSTASSVQTVYNRIATQCGSTTSGDSTQYCSDILGACAGGVLAYTSPSTSQMVNCPLFFNQSPLSSQCHAQDQATTILHEMTHLRQVKGTSDYGGYGYQFVRSLSAAQNLNHADTYTLFAQALYAQC.

The N-terminal stretch at 1–19 is a signal peptide; that stretch reads MKFQILSVAALASLASAVS. Residues 20-182 constitute a propeptide that is removed on maturation; it reads DALDKRDSPL…WIDLAKRTIV (163 aa). Disulfide bonds link Cys186–Cys257 and Cys264–Cys282. Asn214 carries an N-linked (GlcNAc...) asparagine glycan. Zn(2+) is bound at residue His306. The active site involves Glu307. His310 contacts Zn(2+).

Belongs to the peptidase M35 family. Zn(2+) serves as cofactor.

It is found in the secreted. It catalyses the reaction Preferential cleavage of bonds with hydrophobic residues in P1'. Also 3-Asn-|-Gln-4 and 8-Gly-|-Ser-9 bonds in insulin B chain.. Secreted metalloproteinase that allows assimilation of proteinaceous substrates. Shows high activities on basic nuclear substrates such as histone and protamine. This chain is Neutral protease 2 homolog SNOG_02177, found in Phaeosphaeria nodorum (strain SN15 / ATCC MYA-4574 / FGSC 10173) (Glume blotch fungus).